The primary structure comprises 79 residues: Virulence protein MsgA (79 aa).

This sequence belongs to the DinI family.

Affects survival in macrophages. This is Virulence protein MsgA (msgA) from Salmonella typhi.